A 230-amino-acid chain; its full sequence is Ureidoacrylate amidohydrolase RutB (230 aa).

Asp24 functions as the Proton acceptor in the catalytic mechanism. Lys133 is an active-site residue. Cys166 acts as the Nucleophile in catalysis.

Belongs to the isochorismatase family. RutB subfamily.

The enzyme catalyses (Z)-3-ureidoacrylate + H2O + H(+) = (Z)-3-aminoacrylate + NH4(+) + CO2. It catalyses the reaction (Z)-3-ureidoacrylate + H2O = (Z)-3-aminoacrylate + carbamate + H(+). It carries out the reaction (Z)-2-methylureidoacrylate + H2O + H(+) = (Z)-2-methylaminoacrylate + NH4(+) + CO2. In terms of biological role, hydrolyzes ureidoacrylate to form aminoacrylate and carbamate. The carbamate hydrolyzes spontaneously, thereby releasing one of the nitrogen atoms of the pyrimidine ring as ammonia and one of its carbon atoms as CO2. This chain is Ureidoacrylate amidohydrolase RutB, found in Escherichia coli O7:K1 (strain IAI39 / ExPEC).